Here is a 155-residue protein sequence, read N- to C-terminus: uncharacterized protein (155 aa).

2 helical membrane-spanning segments follow: residues 33–53 (ITLL…LFLL) and 83–103 (IGAV…GIWV).

It to E.coli YdgK.

The protein resides in the cell membrane. This is an uncharacterized protein from Synechocystis sp. (strain ATCC 27184 / PCC 6803 / Kazusa).